Consider the following 514-residue polypeptide: 1,25-dihydroxyvitamin D(3) 24-hydroxylase, mitochondrial (514 aa).

The N-terminal 35 residues, 1–35 (MSCPIDKRRTLIAFLRRLRDLGQPPRSVTSKASAS), are a transit peptide targeting the mitochondrion. Position 462 (C462) interacts with heme.

This sequence belongs to the cytochrome P450 family. It depends on heme as a cofactor.

Its subcellular location is the mitochondrion. The catalysed reaction is calcitriol + 2 reduced [adrenodoxin] + O2 + 2 H(+) = calcitetrol + 2 oxidized [adrenodoxin] + H2O. It carries out the reaction calcitetrol + 2 reduced [adrenodoxin] + O2 + 2 H(+) = (1S)-1,25-dihydroxy-24-oxocalciol + 2 oxidized [adrenodoxin] + 2 H2O. The enzyme catalyses (1S)-1,25-dihydroxy-24-oxocalciol + 2 reduced [adrenodoxin] + O2 + 2 H(+) = (1S)-1,23,25-trihydroxy-24-oxocalciol + 2 oxidized [adrenodoxin] + H2O. It catalyses the reaction (1S)-1,23-dihydroxy-24,25,26,27-tetranorcalciol + 2 reduced [adrenodoxin] + O2 + 2 H(+) = (1S)-1-hydroxy-23-oxo-24,25,26,27-tetranorcalciol + 2 oxidized [adrenodoxin] + 2 H2O. The catalysed reaction is (1S)-1-hydroxy-23-oxo-24,25,26,27-tetranorcalciol + 2 reduced [adrenodoxin] + O2 + H(+) = calcitroate + 2 oxidized [adrenodoxin] + H2O. It carries out the reaction calcidiol + 2 reduced [adrenodoxin] + O2 + 2 H(+) = secalciferol + 2 oxidized [adrenodoxin] + H2O. The enzyme catalyses secalciferol + 2 reduced [adrenodoxin] + O2 + 2 H(+) = 25-hydroxy-24-oxocalciol + 2 oxidized [adrenodoxin] + 2 H2O. It catalyses the reaction 25-hydroxy-24-oxocalciol + 2 reduced [adrenodoxin] + O2 + 2 H(+) = 23S,25-dihydroxy-24-oxocholecalciferol + 2 oxidized [adrenodoxin] + H2O. The catalysed reaction is 20S,23-dihydroxycholecalciferol + 2 reduced [adrenodoxin] + O2 + 2 H(+) = 20S,23,25-trihydroxycholecalciferol + 2 oxidized [adrenodoxin] + H2O. It carries out the reaction 20S,23-dihydroxycholecalciferol + 2 reduced [adrenodoxin] + O2 + 2 H(+) = 20S,23,24-trihydroxycholecalciferol + 2 oxidized [adrenodoxin] + H2O. The enzyme catalyses 20S-hydroxycholecalciferol + 2 reduced [adrenodoxin] + O2 + 2 H(+) = 20S,25-dihydroxycholecalciferol + 2 oxidized [adrenodoxin] + H2O. It catalyses the reaction 20S-hydroxycholecalciferol + 2 reduced [adrenodoxin] + O2 + 2 H(+) = 20S,24S-dihydroxycholecalciferol + 2 oxidized [adrenodoxin] + H2O. The catalysed reaction is 20S-hydroxycholecalciferol + 2 reduced [adrenodoxin] + O2 + 2 H(+) = 20S,24R-dihydroxycholecalciferol + 2 oxidized [adrenodoxin] + H2O. Functionally, a cytochrome P450 monooxygenase with a key role in vitamin D catabolism and calcium homeostasis. Via C24-oxidation pathway, catalyzes the inactivation of both the vitamin D precursor calcidiol (25-hydroxyvitamin D(3)) and the active hormone calcitriol (1-alpha,25-dihydroxyvitamin D(3)). With initial hydroxylation at C-24 (via C24-oxidation pathway), performs a sequential 6-step oxidation of calcitriol leading to the formation of the biliary metabolite calcitroic acid. Hydroxylates at C-24 or C-25 other vitamin D active metabolites, such as CYP11A1-derived secosteroids 20S-hydroxycholecalciferol and 20S,23-dihydroxycholecalciferol. Mechanistically, uses molecular oxygen inserting one oxygen atom into a substrate, and reducing the second into a water molecule, with two electrons provided by NADPH via FDXR/adrenodoxin reductase and FDX1/adrenodoxin. This Rattus norvegicus (Rat) protein is 1,25-dihydroxyvitamin D(3) 24-hydroxylase, mitochondrial (Cyp24a1).